Consider the following 380-residue polypeptide: S-phase entry cyclin-6 (380 aa).

The interval 63-91 (PRGKLQRDSTHLEKTRKRQLSNDSTDPIE) is disordered.

Belongs to the cyclin family. Cyclin AB subfamily.

Involved in G1/S and or S phase progression. Interacts with CDC28. The chain is S-phase entry cyclin-6 (CLB6) from Saccharomyces cerevisiae (strain ATCC 204508 / S288c) (Baker's yeast).